A 110-amino-acid chain; its full sequence is uncharacterized protein (110 aa).

The disordered stretch occupies residues 85-110 (ARKAERPSQGGKDYNGTAKSAQSTTV). Positions 101–110 (TAKSAQSTTV) are enriched in polar residues.

This is an uncharacterized protein from Saccharomyces cerevisiae (strain ATCC 204508 / S288c) (Baker's yeast).